A 1863-amino-acid polypeptide reads, in one-letter code: Breast cancer type 1 susceptibility protein homolog (1863 aa).

M1 is modified (N-acetylmethionine). Residues 24–65 form an RING-type zinc finger; that stretch reads CPICLELIKEPVSTKCDHIFCKFCMLKLLNQKKGPSQCPLCK. A Glycyl lysine isopeptide (Lys-Gly) (interchain with G-Cter in SUMO2) cross-link involves residue K109. Residue S114 is modified to Phosphoserine. Residues 230–267 form a disordered region; sequence ETDVTNTEHHQPSNNDLNTTEKRATERHPEKYQGSSVS. A compositionally biased stretch (basic and acidic residues) spans 248-260; the sequence is TTEKRATERHPEK. Residue K301 forms a Glycyl lysine isopeptide (Lys-Gly) (interchain with G-Cter in SUMO2) linkage. The segment at 306 to 338 is disordered; it reads NKSKQPGLARSQHNRWAGSKETCNDRRTPSTEK. Positions 327–338 are enriched in basic and acidic residues; that stretch reads TCNDRRTPSTEK. K339 is covalently cross-linked (Glycyl lysine isopeptide (Lys-Gly) (interchain with G-Cter in SUMO2)). Phosphoserine occurs at positions 395, 398, 423, and 434. Glycyl lysine isopeptide (Lys-Gly) (interchain with G-Cter in SUMO2) cross-links involve residues K443, K459, and K519. At S551 the chain carries Phosphoserine. Residues K583 and K654 each participate in a glycyl lysine isopeptide (Lys-Gly) (interchain with G-Cter in SUMO2) cross-link. A disordered region spans residues 650–739; sequence IKKKKYNQMP…EKEEKLETVK (90 aa). Phosphoserine occurs at positions 694, 708, and 725. Polar residues predominate over residues 705–716; it reads APGSFTNCSNTS. The segment covering 727–737 has biased composition (basic and acidic residues); that stretch reads PREEKEEKLET. Glycyl lysine isopeptide (Lys-Gly) (interchain with G-Cter in SUMO2) cross-links involve residues K734 and K739. Residues S753 and S840 each carry the phosphoserine modification. Residues 896–915 form a disordered region; that stretch reads SPKVTFEREQKEQNQGKNES. A compositionally biased stretch (basic and acidic residues) spans 900–909; that stretch reads TFEREQKEQN. Residues K918 and K987 each participate in a glycyl lysine isopeptide (Lys-Gly) (interchain with G-Cter in SUMO2) cross-link. Position 988 is a phosphoserine; by CHEK2 (S988). At S1009 the chain carries Phosphoserine. K1079 is covalently cross-linked (Glycyl lysine isopeptide (Lys-Gly) (interchain with G-Cter in SUMO2)). Phosphoserine is present on residues S1143, S1189, S1191, S1211, S1217, S1218, S1280, S1328, S1336, S1342, and S1387. A disordered region spans residues 1181-1216; it reads VQRGELSRSPSPFTHTHLAQGYRRGAKKLESSEENL. The tract at residues 1322–1395 is disordered; it reads KQMRHQSESQ…SSQSDILTTQ (74 aa). The segment covering 1373–1395 has biased composition (polar residues); sequence ESETSVSEDCSGLSSQSDILTTQ. Position 1394 is a phosphothreonine (T1394). The segment at 1397 to 1424 is interaction with PALB2; it reads RDTMQDNLIKLQQEMAELEAVLEQHGSQ. Phosphoserine is present on residues S1423, S1457, S1524, and S1542. Positions 1440–1505 are disordered; it reads EDLQNPEQST…SSPSKCPSLD (66 aa). Positions 1444 to 1470 are enriched in polar residues; the sequence is NPEQSTSEKAVLTSQKSSEYPISQNPE. The segment at 1565-1642 is disordered; it reads ESGISLFSDD…SREKPELTAS (78 aa). The span at 1610–1624 shows a compositional bias: polar residues; it reads SAQSPAAAHTTNTAG. 2 consecutive BRCT domains span residues 1642 to 1736 and 1756 to 1855; these read STER…DFEV and QDRK…TYLI.

Heterodimer with BARD1. Part of the BRCA1-associated genome surveillance complex (BASC), which contains BRCA1, MSH2, MSH6, MLH1, ATM, BLM, PMS2 and the MRE11-RAD50-NBN protein (MRN) complex. This association could be a dynamic process changing throughout the cell cycle and within subnuclear domains. Component of the BRCA1-A complex, at least composed of BRCA1, BARD1, UIMC1/RAP80, ABRAXAS1, BRCC3/BRCC36, BABAM2 and BABAM1/NBA1. Interacts (via the BRCT domains) with ABRAXAS1 (phosphorylated form); this is important for recruitment to sites of DNA damage. Can form a heterotetramer with two molecules of ABRAXAS1 (phosphorylated form). Component of the BRCA1-RBBP8 complex. Interacts (via the BRCT domains) with RBBP8 ('Ser-327' phosphorylated form); the interaction ubiquitinates RBBP8, regulates CHEK1 activation, and involves RBBP8 in BRCA1-dependent G2/M checkpoint control on DNA damage. Associates with RNA polymerase II holoenzyme. Interacts with SMC1A, NELFB, DCLRE1C, CLSPN. CHEK1, CHEK2, BAP1, BRCC3, UBXN1 and PCLAF. Interacts (via BRCT domains) with BRIP1 (phosphorylated form). Interacts with FANCD2 (ubiquitinated form). Interacts with H2AX (phosphorylated on 'Ser-140'). Interacts (via the BRCT domains) with ACACA (phosphorylated form); the interaction prevents dephosphorylation of ACACA. Part of a BRCA complex containing BRCA1, BRCA2 and PALB2. Interacts directly with PALB2; the interaction is essential for its function in HRR. Interacts directly with BRCA2; the interaction occurs only in the presence of PALB2 which serves as the bridging protein. Interacts (via the BRCT domains) with LMO4; the interaction represses the transcriptional activity of BRCA1. Interacts (via the BRCT domains) with CCAR2 (via N-terminus); the interaction represses the transcriptional activator activity of BRCA1. Interacts with EXD2. Interacts (via C-terminus) with DHX9; this interaction is direct and links BRCA1 to the RNA polymerase II holoenzyme. Interacts with DNA helicase ZGRF1; the interaction is increased following DNA damage induction. In terms of processing, phosphorylated in response to IR, UV, and various stimuli that cause checkpoint activation, probably by ATM or ATR. Phosphorylation at Ser-988 by CHEK2 regulates mitotic spindle assembly. Phosphorylation by AURKA regulates centrosomal microtubule nucleation. Autoubiquitinated, undergoes 'Lys-6'-linked polyubiquitination. 'Lys-6'-linked polyubiquitination does not promote degradation.

The protein resides in the nucleus. It localises to the chromosome. The protein localises to the cytoplasm. The enzyme catalyses S-ubiquitinyl-[E2 ubiquitin-conjugating enzyme]-L-cysteine + [acceptor protein]-L-lysine = [E2 ubiquitin-conjugating enzyme]-L-cysteine + N(6)-ubiquitinyl-[acceptor protein]-L-lysine.. In terms of biological role, E3 ubiquitin-protein ligase that specifically mediates the formation of 'Lys-6'-linked polyubiquitin chains and plays a central role in DNA repair by facilitating cellular responses to DNA damage. It is unclear whether it also mediates the formation of other types of polyubiquitin chains. The BRCA1-BARD1 heterodimer coordinates a diverse range of cellular pathways such as DNA damage repair, ubiquitination and transcriptional regulation to maintain genomic stability. Regulates centrosomal microtubule nucleation. Required for appropriate cell cycle arrests after ionizing irradiation in both the S-phase and the G2 phase of the cell cycle. Required for FANCD2 targeting to sites of DNA damage. Inhibits lipid synthesis by binding to inactive phosphorylated ACACA and preventing its dephosphorylation. Contributes to homologous recombination repair (HRR) via its direct interaction with PALB2, fine-tunes recombinational repair partly through its modulatory role in the PALB2-dependent loading of BRCA2-RAD51 repair machinery at DNA breaks. Component of the BRCA1-RBBP8 complex which regulates CHEK1 activation and controls cell cycle G2/M checkpoints on DNA damage via BRCA1-mediated ubiquitination of RBBP8. Acts as a transcriptional activator. This chain is Breast cancer type 1 susceptibility protein homolog (BRCA1), found in Pan troglodytes (Chimpanzee).